The primary structure comprises 278 residues: Non-heme chloroperoxidase (278 aa).

One can recognise an AB hydrolase-1 domain in the interval 24-259 (PIVFHHGWPL…LKTYPGYSHG (236 aa)). Residues S97, D229, and H258 contribute to the active site.

Belongs to the AB hydrolase superfamily. Bacterial non-heme haloperoxidase / perhydrolase family. As to quaternary structure, homodimer.

Functionally, chlorinates and brominates suitable organic compounds. Involved in the biosynthesis of the antibiotic pyrrolnitrin. In Burkholderia pyrrocinia (Pseudomonas pyrrocinia), this protein is Non-heme chloroperoxidase (cpo).